Consider the following 1246-residue polypeptide: Putative helicase L115 (1246 aa).

Residues 1-21 (MSKTITKKVNKKTKKSTKINP) are disordered. Residues 872 to 1030 (AKFTDGYHGF…YYMLKMLQTG (159 aa)) enclose the Helicase ATP-binding domain. 885 to 892 (SDVGSGKT) lines the ATP pocket.

The chain is Putative helicase L115 from Acanthamoeba polyphaga (Amoeba).